We begin with the raw amino-acid sequence, 340 residues long: Arginine N-succinyltransferase subunit beta (340 aa).

It belongs to the succinylarginine dihydrolase family. In terms of assembly, heterotetramer of two alpha and two beta subunits.

It catalyses the reaction succinyl-CoA + L-arginine = N(2)-succinyl-L-arginine + CoA + H(+). It participates in amino-acid degradation; L-arginine degradation via AST pathway; L-glutamate and succinate from L-arginine: step 1/5. The polypeptide is Arginine N-succinyltransferase subunit beta (aruG) (Pseudomonas aeruginosa (strain ATCC 15692 / DSM 22644 / CIP 104116 / JCM 14847 / LMG 12228 / 1C / PRS 101 / PAO1)).